The following is a 212-amino-acid chain: Protein-L-isoaspartate O-methyltransferase (212 aa).

The active site involves S60.

It belongs to the methyltransferase superfamily. L-isoaspartyl/D-aspartyl protein methyltransferase family.

The protein localises to the cytoplasm. The enzyme catalyses [protein]-L-isoaspartate + S-adenosyl-L-methionine = [protein]-L-isoaspartate alpha-methyl ester + S-adenosyl-L-homocysteine. Its function is as follows. Catalyzes the methyl esterification of L-isoaspartyl residues in peptides and proteins that result from spontaneous decomposition of normal L-aspartyl and L-asparaginyl residues. It plays a role in the repair and/or degradation of damaged proteins. This Pseudomonas putida (strain ATCC 700007 / DSM 6899 / JCM 31910 / BCRC 17059 / LMG 24140 / F1) protein is Protein-L-isoaspartate O-methyltransferase.